Consider the following 196-residue polypeptide: Pyridoxal 5'-phosphate synthase subunit PdxT (196 aa).

L-glutamine is bound at residue 47–49 (GES). Cysteine 79 acts as the Nucleophile in catalysis. Residues arginine 106 and 134–135 (IR) contribute to the L-glutamine site. Active-site charge relay system residues include histidine 170 and glutamate 172.

The protein belongs to the glutaminase PdxT/SNO family. In terms of assembly, in the presence of PdxS, forms a dodecamer of heterodimers. Only shows activity in the heterodimer.

The enzyme catalyses aldehydo-D-ribose 5-phosphate + D-glyceraldehyde 3-phosphate + L-glutamine = pyridoxal 5'-phosphate + L-glutamate + phosphate + 3 H2O + H(+). It catalyses the reaction L-glutamine + H2O = L-glutamate + NH4(+). It participates in cofactor biosynthesis; pyridoxal 5'-phosphate biosynthesis. Its function is as follows. Catalyzes the hydrolysis of glutamine to glutamate and ammonia as part of the biosynthesis of pyridoxal 5'-phosphate. The resulting ammonia molecule is channeled to the active site of PdxS. The polypeptide is Pyridoxal 5'-phosphate synthase subunit PdxT (Bacillus thuringiensis subsp. konkukian (strain 97-27)).